A 427-amino-acid chain; its full sequence is Acyl-CoA hydrolase 2 (427 aa).

15 to 83 (LLQKLPSSSL…FLLKQYDYFG (69 aa)) provides a ligand contact to a nucleoside 3',5'-cyclic phosphate. Residues Asp337, Ser359, and Gln409 each act as charge relay system in the active site. Positions 425–427 (SKL) match the Microbody targeting signal motif.

Belongs to the C/M/P thioester hydrolase family. In terms of assembly, homotetramer. In terms of tissue distribution, mostly expressed in leaves and flowers, and, to a lower extent, in seedlings and siliques.

The protein resides in the peroxisome matrix. The catalysed reaction is a fatty acyl-CoA + H2O = a fatty acid + CoA + H(+). The enzyme catalyses dodecanoyl-CoA + H2O = dodecanoate + CoA + H(+). It catalyses the reaction tetradecanoyl-CoA + H2O = tetradecanoate + CoA + H(+). It carries out the reaction octadecanoyl-CoA + H2O = octadecanoate + CoA + H(+). The catalysed reaction is (9Z)-hexadecenoyl-CoA + H2O = (9Z)-hexadecenoate + CoA + H(+). The enzyme catalyses (5Z,8Z,11Z,14Z)-eicosatetraenoyl-CoA + H2O = (5Z,8Z,11Z,14Z)-eicosatetraenoate + CoA + H(+). It catalyses the reaction hexadecanoyl-CoA + H2O = hexadecanoate + CoA + H(+). It carries out the reaction (9Z)-octadecenoyl-CoA + H2O = (9Z)-octadecenoate + CoA + H(+). The catalysed reaction is (9Z,12Z)-octadecadienoyl-CoA + H2O = (9Z,12Z)-octadecadienoate + CoA + H(+). Its pathway is lipid metabolism; fatty acid metabolism. With respect to regulation, insensitive to feedback inhibition by free coenzyme A (CoASH). In terms of biological role, catalyzes the hydrolysis of acyl-CoAs into free fatty acids and coenzyme A (CoASH), regulating their respective intracellular levels. Active with both medium chain and long chain acyl-CoAs (e.g. 12:0-CoA, 14:0-CoA, 16:0-CoA, 18:0-CoA, 16:1-CoA, 18:1-CoA, 18:2-CoA and 20:4-CoA) as substrates, palmitoleoyl-CoA (16:1-CoA) being the favorite substrate. This is Acyl-CoA hydrolase 2 from Arabidopsis thaliana (Mouse-ear cress).